Reading from the N-terminus, the 765-residue chain is MTVSPTSAPTQAIDTVERAATTPDEPQPFGELGLKDDEYQRIREILGRRPTDTELAMYSVMWSEHCSYKSSKVHLRYFGETTTDEMRAGMLAGIGENAGVVDIGDGWAVTFKVESHNHPSYVEPYQGAATGVGGIVRDIMAMGARPVAVMDQLRFGAADAPDTRRVLDGVVRGIGGYGNSLGLPNIGGETVFDACYAGNPLVNAMCVGVLRQEDLHMAFASGTGNKIILFGARTGLDGIGGVSVLASDTFDAENSRKKLPSVQVGDPFMEKVLIECCLELYAGGLVVGIQDLGGAGLACATSELASAGDGGMEVRLEAVPLRTAGMTPAEVLCSESQERMCAVVTPENVDAFLAVCRKWDVLATVIGEVTDGDRLRITWHGQTVVDVPPRTVAHEGPVYQRPLARPDTQDALNADSSARLPRPATGAELRATLLALLGSPHLCSRAFITEQYDRYVRGNTVLAEHADGGVLRVDETTGRGIAVSTDASGRYTMLDPYAGAQLALAEAYRNVAVTGATPVAVTNCLNFGSPEDPAVMWQFAQAVRGLADGCVALGIPVTGGNVSFYNQTGSAAILPTPVVGVLGVLDDVSRRLPTALGAEPGETLMLLGETRDEFDGSVWAQVTADHLGGLPPKVDLAREKLLAEVLRAASRDGLVSAAHDLSEGGLAQAVVEAALAGETGCRIVLPEDADPFVTLFSESAGRVLVAVPRTEESRFRSMCEARGLPAVRIGVVDQASDEVEVQGLFTVPLAELRQTSESVLPRLFG.

Residues 1–13 (MTVSPTSAPTQAI) show a composition bias toward polar residues. The interval 1–32 (MTVSPTSAPTQAIDTVERAATTPDEPQPFGEL) is disordered. His65 is a catalytic residue. ATP contacts are provided by Tyr68 and Lys112. Residue Glu114 participates in Mg(2+) binding. Substrate-binding positions include 115 to 118 (SHNH) and Arg137. The active-site Proton acceptor is His116. A Mg(2+)-binding site is contributed by Asp138. Position 263 (Gln263) interacts with substrate. Asp291 serves as a coordination point for Mg(2+). Position 335–337 (335–337 (ESQ)) interacts with substrate. ATP contacts are provided by Asn523 and Gly560. Asn561 lines the Mg(2+) pocket. Ser563 contributes to the substrate binding site.

Belongs to the FGAMS family. In terms of assembly, monomer. Part of the FGAM synthase complex composed of 1 PurL, 1 PurQ and 2 PurS subunits.

It localises to the cytoplasm. It carries out the reaction N(2)-formyl-N(1)-(5-phospho-beta-D-ribosyl)glycinamide + L-glutamine + ATP + H2O = 2-formamido-N(1)-(5-O-phospho-beta-D-ribosyl)acetamidine + L-glutamate + ADP + phosphate + H(+). Its pathway is purine metabolism; IMP biosynthesis via de novo pathway; 5-amino-1-(5-phospho-D-ribosyl)imidazole from N(2)-formyl-N(1)-(5-phospho-D-ribosyl)glycinamide: step 1/2. In terms of biological role, part of the phosphoribosylformylglycinamidine synthase complex involved in the purines biosynthetic pathway. Catalyzes the ATP-dependent conversion of formylglycinamide ribonucleotide (FGAR) and glutamine to yield formylglycinamidine ribonucleotide (FGAM) and glutamate. The FGAM synthase complex is composed of three subunits. PurQ produces an ammonia molecule by converting glutamine to glutamate. PurL transfers the ammonia molecule to FGAR to form FGAM in an ATP-dependent manner. PurS interacts with PurQ and PurL and is thought to assist in the transfer of the ammonia molecule from PurQ to PurL. This is Phosphoribosylformylglycinamidine synthase subunit PurL from Mycolicibacterium paratuberculosis (strain ATCC BAA-968 / K-10) (Mycobacterium paratuberculosis).